The sequence spans 456 residues: Probable glycine dehydrogenase (decarboxylating) subunit 1 (456 aa).

It belongs to the GcvP family. N-terminal subunit subfamily. The glycine cleavage system is composed of four proteins: P, T, L and H. In this organism, the P 'protein' is a heterodimer of two subunits.

The enzyme catalyses N(6)-[(R)-lipoyl]-L-lysyl-[glycine-cleavage complex H protein] + glycine + H(+) = N(6)-[(R)-S(8)-aminomethyldihydrolipoyl]-L-lysyl-[glycine-cleavage complex H protein] + CO2. In terms of biological role, the glycine cleavage system catalyzes the degradation of glycine. The P protein binds the alpha-amino group of glycine through its pyridoxal phosphate cofactor; CO(2) is released and the remaining methylamine moiety is then transferred to the lipoamide cofactor of the H protein. The polypeptide is Probable glycine dehydrogenase (decarboxylating) subunit 1 (Legionella pneumophila (strain Lens)).